Reading from the N-terminus, the 20-residue chain is Unknown protein NF003 from 2D-PAGE (20 aa).

The protein is Unknown protein NF003 from 2D-PAGE of Naegleria fowleri (Brain eating amoeba).